We begin with the raw amino-acid sequence, 346 residues long: NADH-ubiquinone oxidoreductase chain 2 (346 aa).

Helical transmembrane passes span 7–27, 59–79, 93–115, 151–171, 178–198, 200–220, 242–262, 275–294, and 325–345; these read AIIT…NHWI, YFLT…MNMW, ISCT…HFWF, TTLL…GGLN, IMAF…TLSP, ILLL…LMIN, TMML…GFAP, LSMF…YFYL, and LATI…LKAI.

Belongs to the complex I subunit 2 family.

It is found in the mitochondrion inner membrane. The enzyme catalyses a ubiquinone + NADH + 5 H(+)(in) = a ubiquinol + NAD(+) + 4 H(+)(out). Its function is as follows. Core subunit of the mitochondrial membrane respiratory chain NADH dehydrogenase (Complex I) that is believed to belong to the minimal assembly required for catalysis. Complex I functions in the transfer of electrons from NADH to the respiratory chain. The immediate electron acceptor for the enzyme is believed to be ubiquinone. In Pelomedusa subrufa (African side-necked turtle), this protein is NADH-ubiquinone oxidoreductase chain 2 (MT-ND2).